A 120-amino-acid chain; its full sequence is MFLLYEYDLFWVFLIISSLIPILAFLISGVLAPISEGPEKLSSYESGIEPMGDAWLQFRIRYYIFALVFVVFDVETVFLYPWAMSFDVLGVSVFIEALVFVLILIVGSVYAWRKGALEWS.

3 helical membrane-spanning segments follow: residues 10 to 30 (FWVF…ISGV), 64 to 84 (IFAL…PWAM), and 88 to 108 (VLGV…IVGS).

Belongs to the complex I subunit 3 family. As to quaternary structure, NDH is composed of at least 16 different subunits, 5 of which are encoded in the nucleus.

It is found in the plastid. The protein resides in the chloroplast thylakoid membrane. The catalysed reaction is a plastoquinone + NADH + (n+1) H(+)(in) = a plastoquinol + NAD(+) + n H(+)(out). It carries out the reaction a plastoquinone + NADPH + (n+1) H(+)(in) = a plastoquinol + NADP(+) + n H(+)(out). In terms of biological role, NDH shuttles electrons from NAD(P)H:plastoquinone, via FMN and iron-sulfur (Fe-S) centers, to quinones in the photosynthetic chain and possibly in a chloroplast respiratory chain. The immediate electron acceptor for the enzyme in this species is believed to be plastoquinone. Couples the redox reaction to proton translocation, and thus conserves the redox energy in a proton gradient. This Pelargonium hortorum (Common geranium) protein is NAD(P)H-quinone oxidoreductase subunit 3, chloroplastic.